A 528-amino-acid polypeptide reads, in one-letter code: Endoglucanase 24 (528 aa).

An N-terminal signal peptide occupies residues 1–24 (MGSKTKGCCGWLIVALVASLVATA). Asp-109 serves as the catalytic Nucleophile. An N-linked (GlcNAc...) asparagine glycan is attached at Asn-259. The active site involves His-446. A glycan (N-linked (GlcNAc...) asparagine) is linked at Asn-487. Active-site residues include Asp-492 and Glu-501.

This sequence belongs to the glycosyl hydrolase 9 (cellulase E) family.

It localises to the secreted. It catalyses the reaction Endohydrolysis of (1-&gt;4)-beta-D-glucosidic linkages in cellulose, lichenin and cereal beta-D-glucans.. This chain is Endoglucanase 24, found in Oryza sativa subsp. japonica (Rice).